The primary structure comprises 837 residues: Translation initiation factor IF-2 (837 aa).

The segment covering alanine 97–glutamate 139 has biased composition (basic and acidic residues). The segment at alanine 97 to proline 253 is disordered. Positions alanine 140–alanine 175 are enriched in low complexity. The span at proline 176–arginine 197 shows a compositional bias: basic and acidic residues. Positions aspartate 198–leucine 208 are enriched in basic residues. The segment covering arginine 219–arginine 229 has biased composition (basic and acidic residues). The segment covering arginine 230–glutamine 244 has biased composition (basic residues). A tr-type G domain is found at alanine 337 to glutamate 504. A G1 region spans residues glycine 346–threonine 353. Glycine 346–threonine 353 lines the GTP pocket. The G2 stretch occupies residues glycine 371–histidine 375. Residues aspartate 392 to glycine 395 are G3. Residues aspartate 392–histidine 396 and asparagine 446–aspartate 449 contribute to the GTP site. The tract at residues asparagine 446–aspartate 449 is G4. A G5 region spans residues serine 482–lysine 484.

This sequence belongs to the TRAFAC class translation factor GTPase superfamily. Classic translation factor GTPase family. IF-2 subfamily.

It localises to the cytoplasm. In terms of biological role, one of the essential components for the initiation of protein synthesis. Protects formylmethionyl-tRNA from spontaneous hydrolysis and promotes its binding to the 30S ribosomal subunits. Also involved in the hydrolysis of GTP during the formation of the 70S ribosomal complex. The polypeptide is Translation initiation factor IF-2 (Stutzerimonas stutzeri (strain A1501) (Pseudomonas stutzeri)).